Here is a 288-residue protein sequence, read N- to C-terminus: MIGPISQINISGGLSEKETSSLISNEELKNIITQLETDISDGSWFHKNYSRMDVEVMPALVIQANNKYPEMNLNLVTSPLDLSIEIKNVIENGVRSSRFIINMGEGGIHFSVIDYKHINGKTSLILFEPANFNSMGPAMLAIRTKTAIERYQLPDCHFSMVEMDIQRSSSECGIFSFALAKKLYIERDSLLKIHEDNIKGILSDGENPLPHDKLDPYLPVTFYKHTQGKKRLNEYLNTNPQGVGTVVNKKNETIVNRFDNNKSIVDGKELSVSVHKKRIAEYKTLLKV.

Residues His-109 and Glu-128 contribute to the active site. CoA is bound at residue His-109. Residue 167–168 (RS) participates in CoA binding. The active site involves Cys-172. 1D-myo-inositol hexakisphosphate is bound by residues 182-185 (KLYI) and 224-225 (KH). 227 to 230 (QGKK) contacts CoA. Arg-257 provides a ligand contact to 1D-myo-inositol hexakisphosphate. Residue 266–270 (DGKEL) participates in CoA binding.

Belongs to the acetyltransferase YopJ family. It depends on 1D-myo-inositol hexakisphosphate as a cofactor.

It localises to the secreted. It carries out the reaction L-threonyl-[protein] + acetyl-CoA = O-acetyl-L-threonyl-[protein] + CoA. The enzyme catalyses L-seryl-[protein] + acetyl-CoA = O-acetyl-L-seryl-[protein] + CoA. With respect to regulation, 1D-myo-inositol hexakisphosphate activates protein-acetyltransferase activity via an allosteric mechanism: 1D-myo-inositol hexakisphosphate-binding induces a conformational rearrangement that stimulates the interaction with acetyl-CoA. In terms of biological role, serine/threonine-protein acetyltransferase translocated into infected cells, which inhibits the host immune response and induces cell death by mediating acetylation of target proteins. Inhibits the MAPK and NF-kappa-B signaling pathways by acetylating protein-kinases such as MAP2K1, MAP2K6, MAP3K7/TAK1 and I-kappa-B kinase (CHUK/IKKA and IKBKB) on serine and threonine residues critical for their activation by phosphorylation, thereby preventing protein-kinase activation. Promotes pyroptosis, a programmed cell death, in host cells by mediating acetylation of MAP3K7/TAK1: MAP3K7/TAK1 inactivation triggers activation of caspase-8 (CASP8), followed by CASP8-dependent cleavage of gasdermin-D (GSDMD) and induction of pyroptosis. Also able to induce intestinal barrier dysfunction by acetylating and inhibiting host protein-kinases RIPK2/RICK and MAP3K7/TAK1, thereby promoting cell death. The sequence is that of Serine/threonine-protein acetyltransferase YopJ from Yersinia pseudotuberculosis serotype I (strain IP32953).